Here is a 382-residue protein sequence, read N- to C-terminus: Protein delta homolog 2 (382 aa).

Residues 1–26 (MPSGCRCLNLVCLLCILGATSQPARA) form the signal peptide. EGF-like domains follow at residues 27–58 (DDCS…LHCE), 62–89 (RMPG…KFCD), 91–129 (DEHI…RGCE), and 131–172 (KAGP…AHCE). The Extracellular portion of the chain corresponds to 27–305 (DDCSSHCDLA…RQESGLGESS (279 aa)). Disulfide bonds link cysteine 29–cysteine 40, cysteine 33–cysteine 46, cysteine 48–cysteine 57, cysteine 66–cysteine 71, cysteine 79–cysteine 88, cysteine 95–cysteine 107, cysteine 101–cysteine 117, cysteine 119–cysteine 128, cysteine 135–cysteine 148, cysteine 142–cysteine 160, cysteine 162–cysteine 171, cysteine 178–cysteine 189, cysteine 183–cysteine 198, cysteine 200–cysteine 209, cysteine 216–cysteine 227, cysteine 221–cysteine 236, and cysteine 238–cysteine 247. Residue asparagine 157 is glycosylated (N-linked (GlcNAc...) asparagine). An EGF-like 5; calcium-binding domain is found at 174–210 (NVDDCLMRPCANGATCIDGINRFSCLCPEGFAGRFCT). Positions 212 to 248 (NLDDCASRPCQRGARCRDRVHDFDCLCPSGYGGKTCE) constitute an EGF-like 6; calcium-binding domain. A helical transmembrane segment spans residues 306–326 (LVALVVFGSLTAALVLATVLL). The Cytoplasmic portion of the chain corresponds to 327-382 (TLRAWRRGICPTGPCCYPAPHYAPARQDQECQVSMLPAGFPLSPDLPPEPGKTTAL).

In terms of tissue distribution, detected in a number of tissues including lung, brain, adrenal gland, testis, adult liver, placenta, ovary and thymus. Not detected in fetal liver or in adult spleen, muscle and heart.

It is found in the membrane. Functionally, regulates adipogenesis. The sequence is that of Protein delta homolog 2 (Dlk2) from Mus musculus (Mouse).